The sequence spans 200 residues: dITP/XTP pyrophosphatase (200 aa).

5–10 lines the substrate pocket; the sequence is TRNEGK. Residue D67 is the Proton acceptor of the active site. D67 lines the Mg(2+) pocket. Substrate contacts are provided by residues S68, 151-154, K174, and 179-180; these read FGYD and HR.

The protein belongs to the HAM1 NTPase family. In terms of assembly, homodimer. The cofactor is Mg(2+).

It carries out the reaction XTP + H2O = XMP + diphosphate + H(+). The enzyme catalyses dITP + H2O = dIMP + diphosphate + H(+). The catalysed reaction is ITP + H2O = IMP + diphosphate + H(+). Functionally, pyrophosphatase that catalyzes the hydrolysis of nucleoside triphosphates to their monophosphate derivatives, with a high preference for the non-canonical purine nucleotides XTP (xanthosine triphosphate), dITP (deoxyinosine triphosphate) and ITP. Seems to function as a house-cleaning enzyme that removes non-canonical purine nucleotides from the nucleotide pool, thus preventing their incorporation into DNA/RNA and avoiding chromosomal lesions. The polypeptide is dITP/XTP pyrophosphatase (Streptococcus pneumoniae serotype 4 (strain ATCC BAA-334 / TIGR4)).